The primary structure comprises 408 residues: Aminomethyltransferase, mitochondrial (408 aa).

The N-terminal 30 residues, 1–30 (MRGGLWQLGQSITRRLANGGDKKAVARRCF), are a transit peptide targeting the mitochondrion. 3 residues coordinate substrate: E235, R266, and Y404.

This sequence belongs to the GcvT family. The glycine cleavage system is composed of four proteins: P, T, L and H.

The protein localises to the mitochondrion. The enzyme catalyses N(6)-[(R)-S(8)-aminomethyldihydrolipoyl]-L-lysyl-[protein] + (6S)-5,6,7,8-tetrahydrofolate = N(6)-[(R)-dihydrolipoyl]-L-lysyl-[protein] + (6R)-5,10-methylene-5,6,7,8-tetrahydrofolate + NH4(+). Functionally, the glycine cleavage system catalyzes the degradation of glycine. This is Aminomethyltransferase, mitochondrial (GDCST) from Pisum sativum (Garden pea).